Reading from the N-terminus, the 131-residue chain is Small ribosomal subunit protein uS8 (131 aa).

This sequence belongs to the universal ribosomal protein uS8 family. Part of the 30S ribosomal subunit. Contacts proteins S5 and S12.

Functionally, one of the primary rRNA binding proteins, it binds directly to 16S rRNA central domain where it helps coordinate assembly of the platform of the 30S subunit. The polypeptide is Small ribosomal subunit protein uS8 (Chlorobium chlorochromatii (strain CaD3)).